Reading from the N-terminus, the 471-residue chain is Argininosuccinate lyase (471 aa).

This sequence belongs to the lyase 1 family. Argininosuccinate lyase subfamily.

The protein localises to the cytoplasm. The enzyme catalyses 2-(N(omega)-L-arginino)succinate = fumarate + L-arginine. It participates in amino-acid biosynthesis; L-arginine biosynthesis; L-arginine from L-ornithine and carbamoyl phosphate: step 3/3. The polypeptide is Argininosuccinate lyase (Cereibacter sphaeroides (strain ATCC 17023 / DSM 158 / JCM 6121 / CCUG 31486 / LMG 2827 / NBRC 12203 / NCIMB 8253 / ATH 2.4.1.) (Rhodobacter sphaeroides)).